A 431-amino-acid polypeptide reads, in one-letter code: UDP-N-acetylmuramate--L-alanine ligase (431 aa).

Residue 108 to 114 coordinates ATP; the sequence is GSHGKTS.

It belongs to the MurCDEF family.

The protein localises to the cytoplasm. It carries out the reaction UDP-N-acetyl-alpha-D-muramate + L-alanine + ATP = UDP-N-acetyl-alpha-D-muramoyl-L-alanine + ADP + phosphate + H(+). It participates in cell wall biogenesis; peptidoglycan biosynthesis. Functionally, cell wall formation. This Exiguobacterium sibiricum (strain DSM 17290 / CCUG 55495 / CIP 109462 / JCM 13490 / 255-15) protein is UDP-N-acetylmuramate--L-alanine ligase.